Reading from the N-terminus, the 311-residue chain is Beta-lactamase (311 aa).

A signal peptide (tat-type signal) is located at residues 1–36 (MRKPTSSLTRRSVLGAGLGLGGALALGSTTASAASA). The Acyl-ester intermediate role is filled by Ser-86. Residue 252–254 (KSG) participates in substrate binding.

It belongs to the class-A beta-lactamase family. Predicted to be exported by the Tat system. The position of the signal peptide cleavage has not been experimentally proven.

The catalysed reaction is a beta-lactam + H2O = a substituted beta-amino acid. Hydrolyzes benzylpenicillin and cloxacillin (at 10% of the rate of benzylpenicillin). This chain is Beta-lactamase (bla), found in Streptomyces cellulosae.